Consider the following 204-residue polypeptide: Nicotine blue oxidoreductase (204 aa).

Homotetramer. FMN is required as a cofactor.

The catalysed reaction is 3,3'-bipyridine-2,2',5,5',6,6'-hexol + NADP(+) = (E)-2,2',5,5'-tetrahydroxy-6H,6'H-(3,3'-bipyridinylidene)-6,6'-dione + NADPH + 3 H(+). It catalyses the reaction 3,3'-bipyridine-2,2',5,5',6,6'-hexol + NAD(+) = (E)-2,2',5,5'-tetrahydroxy-6H,6'H-(3,3'-bipyridinylidene)-6,6'-dione + NADH + 3 H(+). It functions in the pathway alkaloid degradation; nicotine degradation. In terms of biological role, catalyzes the reduction of nicotine blue to its hydroquinone form. Nicotine blue is the name given to the compound formed by the autocatalytic condensation of two molecules of 2,3,6-trihydroxypyridine, an intermediate in the nicotine degradation pathway. May play a role in preventing the intracellular formation of nicotine blue semiquinone radicals, which by redox cycling would lead to the formation of toxic reactive oxygen species. Besides nicotine blue, several other quinones are reduced by nboR. The sequence is that of Nicotine blue oxidoreductase (nboR) from Paenarthrobacter nicotinovorans (Arthrobacter nicotinovorans).